The sequence spans 362 residues: MKFIDEARIEVIAGQGGSGSASMRREKFIEFGGPDGGDGGKGGSVWATADRNINTLIDYRYAKTHTAKNGEPGRGADCYGRAGDDIELRMPVGTIISDYETGEPIADLTTHGERLCLAQGGVGGWGNIHFKSSTNRAPRQKTNGKEGERRKLKLELKVLADVGLLGMPNAGKSTLITAVSNARPKIADYPFTTLHPNLGVVRVGNERSFVIADIPGLIEGAAEGAGLGHRFLRHLQRTGVLLHLVDIAPFDENIDPVADAVAIVNELRKYDEALVEKPRWLVLNKVDMIPEEDRKKVVADFIKRFKWKGPVFEISALTGLGCDKLCYALQDYLDSVRRDRDDAEERAADPRYQDQAADKSPD.

Residues 1 to 159 (MKFIDEARIE…RKLKLELKVL (159 aa)) enclose the Obg domain. The segment at 129–148 (HFKSSTNRAPRQKTNGKEGE) is disordered. Polar residues predominate over residues 130-141 (FKSSTNRAPRQK). The OBG-type G domain maps to 160 to 334 (ADVGLLGMPN…LCYALQDYLD (175 aa)). GTP is bound by residues 166 to 173 (GMPNAGKS), 191 to 195 (FTTLH), 213 to 216 (DIPG), 284 to 287 (NKVD), and 315 to 317 (SAL). Mg(2+)-binding residues include serine 173 and threonine 193. The interval 340–362 (RDDAEERAADPRYQDQAADKSPD) is disordered.

This sequence belongs to the TRAFAC class OBG-HflX-like GTPase superfamily. OBG GTPase family. Monomer. Requires Mg(2+) as cofactor.

It localises to the cytoplasm. Its function is as follows. An essential GTPase which binds GTP, GDP and possibly (p)ppGpp with moderate affinity, with high nucleotide exchange rates and a fairly low GTP hydrolysis rate. Plays a role in control of the cell cycle, stress response, ribosome biogenesis and in those bacteria that undergo differentiation, in morphogenesis control. The polypeptide is GTPase Obg (Polynucleobacter asymbioticus (strain DSM 18221 / CIP 109841 / QLW-P1DMWA-1) (Polynucleobacter necessarius subsp. asymbioticus)).